Reading from the N-terminus, the 216-residue chain is Protein GrpE (216 aa).

2 disordered regions span residues Met-1 to Thr-45 and Arg-185 to Val-216. Acidic residues predominate over residues Thr-205–Val-216.

This sequence belongs to the GrpE family. In terms of assembly, homodimer.

Its subcellular location is the cytoplasm. Participates actively in the response to hyperosmotic and heat shock by preventing the aggregation of stress-denatured proteins, in association with DnaK and GrpE. It is the nucleotide exchange factor for DnaK and may function as a thermosensor. Unfolded proteins bind initially to DnaJ; upon interaction with the DnaJ-bound protein, DnaK hydrolyzes its bound ATP, resulting in the formation of a stable complex. GrpE releases ADP from DnaK; ATP binding to DnaK triggers the release of the substrate protein, thus completing the reaction cycle. Several rounds of ATP-dependent interactions between DnaJ, DnaK and GrpE are required for fully efficient folding. This Streptomyces griseus subsp. griseus (strain JCM 4626 / CBS 651.72 / NBRC 13350 / KCC S-0626 / ISP 5235) protein is Protein GrpE.